The chain runs to 284 residues: Thymidylate synthase (284 aa).

Arg34 lines the dUMP pocket. His64 lines the (6R)-5,10-methylene-5,6,7,8-tetrahydrofolate pocket. DUMP is bound at residue 139-140 (RR). Cys159 serves as the catalytic Nucleophile. DUMP is bound by residues 186–189 (RSAD), Asn197, and 227–229 (HIY). Asp189 is a binding site for (6R)-5,10-methylene-5,6,7,8-tetrahydrofolate. Residue Ala283 coordinates (6R)-5,10-methylene-5,6,7,8-tetrahydrofolate.

It belongs to the thymidylate synthase family. Bacterial-type ThyA subfamily. In terms of assembly, homodimer.

Its subcellular location is the cytoplasm. It carries out the reaction dUMP + (6R)-5,10-methylene-5,6,7,8-tetrahydrofolate = 7,8-dihydrofolate + dTMP. It functions in the pathway pyrimidine metabolism; dTTP biosynthesis. Its function is as follows. Catalyzes the reductive methylation of 2'-deoxyuridine-5'-monophosphate (dUMP) to 2'-deoxythymidine-5'-monophosphate (dTMP) while utilizing 5,10-methylenetetrahydrofolate (mTHF) as the methyl donor and reductant in the reaction, yielding dihydrofolate (DHF) as a by-product. This enzymatic reaction provides an intracellular de novo source of dTMP, an essential precursor for DNA biosynthesis. The sequence is that of Thymidylate synthase from Polaromonas sp. (strain JS666 / ATCC BAA-500).